The chain runs to 231 residues: 7-cyano-7-deazaguanine synthase (231 aa).

ATP is bound at residue Phe8–Leu18. The Zn(2+) site is built by Cys188, Cys197, Cys200, and Cys203.

This sequence belongs to the QueC family. Requires Zn(2+) as cofactor.

It catalyses the reaction 7-carboxy-7-deazaguanine + NH4(+) + ATP = 7-cyano-7-deazaguanine + ADP + phosphate + H2O + H(+). Its pathway is purine metabolism; 7-cyano-7-deazaguanine biosynthesis. Its function is as follows. Catalyzes the ATP-dependent conversion of 7-carboxy-7-deazaguanine (CDG) to 7-cyano-7-deazaguanine (preQ(0)). This Citrobacter koseri (strain ATCC BAA-895 / CDC 4225-83 / SGSC4696) protein is 7-cyano-7-deazaguanine synthase.